Reading from the N-terminus, the 122-residue chain is Alpha-amylase/trypsin inhibitor (122 aa).

5 disulfide bridges follow: cysteine 6–cysteine 55, cysteine 20–cysteine 44, cysteine 29–cysteine 85, cysteine 45–cysteine 103, and cysteine 57–cysteine 114.

It belongs to the protease inhibitor I6 (cereal trypsin/alpha-amylase inhibitor) family. In terms of tissue distribution, seeds.

It localises to the secreted. May play a protective role against endo- and exogenous hydrolytic activities in the Ragi seeds. The chain is Alpha-amylase/trypsin inhibitor from Eleusine coracana (Indian finger millet).